The sequence spans 90 residues: Probable oxaloacetate decarboxylase gamma chain 2 (90 aa).

The helical transmembrane segment at 10–32 (GINLLTLGMGFVFIFLIFLVYAT) threads the bilayer.

The protein belongs to the OadG family. Heterotrimer of an alpha, a beta and a gamma subunit. Na(+) serves as cofactor.

It localises to the cell membrane. The enzyme catalyses oxaloacetate + 2 Na(+)(in) + H(+) = pyruvate + 2 Na(+)(out) + CO2. Catalyzes the decarboxylation of oxaloacetate coupled to Na(+) translocation. The sequence is that of Probable oxaloacetate decarboxylase gamma chain 2 (oadG2) from Vibrio cholerae serotype O1 (strain ATCC 39315 / El Tor Inaba N16961).